Reading from the N-terminus, the 477-residue chain is Cysteine--tRNA ligase (477 aa).

Position 28 (Cys28) interacts with Zn(2+). The 'HIGH' region motif lies at 30 to 40 (PTVYDYAHIGN). 3 residues coordinate Zn(2+): Cys213, His238, and Glu242. The 'KMSKS' region signature appears at 270-274 (KMSKS). Lys273 contributes to the ATP binding site.

It belongs to the class-I aminoacyl-tRNA synthetase family. As to quaternary structure, monomer. Zn(2+) serves as cofactor.

The protein localises to the cytoplasm. The catalysed reaction is tRNA(Cys) + L-cysteine + ATP = L-cysteinyl-tRNA(Cys) + AMP + diphosphate. This chain is Cysteine--tRNA ligase, found in Chlamydia trachomatis serovar A (strain ATCC VR-571B / DSM 19440 / HAR-13).